The primary structure comprises 181 residues: ECF RNA polymerase sigma factor EcfG (181 aa).

The interval 15 to 77 is sigma-70 factor domain-2; that stretch reads VPSLRAFAIS…FRSDYRKRRR (63 aa). The segment at 103 to 155 is sigma-70 factor domain-4; that stretch reads EEFRAALDKLPQDQREALILVGASGFSYEDAAAICGCAVGTIKSRVNRARSKL.

Belongs to the sigma-70 factor family. ECF subfamily.

Sigma factors are initiation factors that promote the attachment of RNA polymerase to specific initiation sites and are then released. Regulates expression of hpnP under a variety of stresses, including high temperature, pH stress, and presence of nonionic osmolytes. This is ECF RNA polymerase sigma factor EcfG from Rhodopseudomonas palustris (strain TIE-1).